Reading from the N-terminus, the 161-residue chain is Nucleoside diphosphate kinase (161 aa).

Residues lysine 13, phenylalanine 61, arginine 89, threonine 95, arginine 106, and asparagine 116 each coordinate ATP. Histidine 119 acts as the Pros-phosphohistidine intermediate in catalysis.

The protein belongs to the NDK family. It depends on Mg(2+) as a cofactor.

It is found in the cytoplasm. The catalysed reaction is a 2'-deoxyribonucleoside 5'-diphosphate + ATP = a 2'-deoxyribonucleoside 5'-triphosphate + ADP. The enzyme catalyses a ribonucleoside 5'-diphosphate + ATP = a ribonucleoside 5'-triphosphate + ADP. Major role in the synthesis of nucleoside triphosphates other than ATP. The ATP gamma phosphate is transferred to the NDP beta phosphate via a ping-pong mechanism, using a phosphorylated active-site intermediate. This chain is Nucleoside diphosphate kinase, found in Halobacterium salinarum (strain ATCC 29341 / DSM 671 / R1).